We begin with the raw amino-acid sequence, 890 residues long: DNA mismatch repair protein MutS (890 aa).

An ATP-binding site is contributed by 634–641; the sequence is GPNMGGKS.

It belongs to the DNA mismatch repair MutS family.

Functionally, this protein is involved in the repair of mismatches in DNA. It is possible that it carries out the mismatch recognition step. This protein has a weak ATPase activity. This is DNA mismatch repair protein MutS from Burkholderia pseudomallei (strain 1710b).